The sequence spans 455 residues: La-related protein 6C (455 aa).

Residues 1-20 (MAQMQREEVESVTTEKKRLD) are compositionally biased toward basic and acidic residues. The tract at residues 1-29 (MAQMQREEVESVTTEKKRLDGGGGSSGAQ) is disordered. The HTH La-type RNA-binding domain maps to 138–229 (NLLSDDLRLK…KRTSQFTDRD (92 aa)). In terms of domain architecture, RRM spans 236–324 (RTVVAENLPD…KGLRVRLLLR (89 aa)). 2 disordered regions span residues 348–396 (SYES…YAVG) and 414–455 (SLGS…PNNL).

The protein localises to the nucleus. Functionally, transcriptional regulator. The polypeptide is La-related protein 6C (LARP6C) (Arabidopsis thaliana (Mouse-ear cress)).